The following is a 214-amino-acid chain: Adenylate kinase (214 aa).

10-15 (GAGKGT) is a binding site for ATP. The NMP stretch occupies residues 30–59 (STGDMLRAAIKAGTELGKQAKSVIDAGQLV). AMP contacts are provided by residues T31, R36, 57-59 (QLV), 85-88 (GFPR), and Q92. Residues 122-159 (GRRAHLASGRTYHNVYNPPKVEGKDDVTGEDLVIREDD) form an LID region. Residues R123 and 132-133 (TY) contribute to the ATP site. 2 residues coordinate AMP: R156 and R167. ATP is bound at residue K200.

It belongs to the adenylate kinase family. In terms of assembly, monomer.

Its subcellular location is the cytoplasm. The enzyme catalyses AMP + ATP = 2 ADP. The protein operates within purine metabolism; AMP biosynthesis via salvage pathway; AMP from ADP: step 1/1. Functionally, catalyzes the reversible transfer of the terminal phosphate group between ATP and AMP. Plays an important role in cellular energy homeostasis and in adenine nucleotide metabolism. This is Adenylate kinase from Photobacterium profundum (strain SS9).